The sequence spans 667 residues: tRNA 5-methylaminomethyl-2-thiouridine biosynthesis bifunctional protein MnmC (667 aa).

Residues 1-241 (MHKLTFAQLS…KREMLCGEKA (241 aa)) are tRNA (mnm(5)s(2)U34)-methyltransferase. Positions 268–667 (VGGGIASLFV…RKWLKGSKVV (400 aa)) are FAD-dependent cmnm(5)s(2)U34 oxidoreductase.

This sequence in the N-terminal section; belongs to the methyltransferase superfamily. tRNA (mnm(5)s(2)U34)-methyltransferase family. The protein in the C-terminal section; belongs to the DAO family. Requires FAD as cofactor.

It is found in the cytoplasm. The enzyme catalyses 5-aminomethyl-2-thiouridine(34) in tRNA + S-adenosyl-L-methionine = 5-methylaminomethyl-2-thiouridine(34) in tRNA + S-adenosyl-L-homocysteine + H(+). In terms of biological role, catalyzes the last two steps in the biosynthesis of 5-methylaminomethyl-2-thiouridine (mnm(5)s(2)U) at the wobble position (U34) in tRNA. Catalyzes the FAD-dependent demodification of cmnm(5)s(2)U34 to nm(5)s(2)U34, followed by the transfer of a methyl group from S-adenosyl-L-methionine to nm(5)s(2)U34, to form mnm(5)s(2)U34. The protein is tRNA 5-methylaminomethyl-2-thiouridine biosynthesis bifunctional protein MnmC of Haemophilus ducreyi (strain 35000HP / ATCC 700724).